The primary structure comprises 485 residues: NADH-quinone oxidoreductase subunit N (485 aa).

A run of 14 helical transmembrane segments spans residues L8–I28, F35–V55, G71–A91, F105–L125, S127–F147, Y159–A179, L203–F223, P235–M255, V271–Q291, L297–Q317, V326–L346, A373–I393, W408–V430, and I455–I475.

It belongs to the complex I subunit 2 family. NDH-1 is composed of 13 different subunits. Subunits NuoA, H, J, K, L, M, N constitute the membrane sector of the complex.

It localises to the cell inner membrane. It catalyses the reaction a quinone + NADH + 5 H(+)(in) = a quinol + NAD(+) + 4 H(+)(out). NDH-1 shuttles electrons from NADH, via FMN and iron-sulfur (Fe-S) centers, to quinones in the respiratory chain. The immediate electron acceptor for the enzyme in this species is believed to be ubiquinone. Couples the redox reaction to proton translocation (for every two electrons transferred, four hydrogen ions are translocated across the cytoplasmic membrane), and thus conserves the redox energy in a proton gradient. The sequence is that of NADH-quinone oxidoreductase subunit N from Escherichia coli O139:H28 (strain E24377A / ETEC).